A 399-amino-acid polypeptide reads, in one-letter code: Elongation factor Tu (399 aa).

Residues 10–209 (KPHVNIGTIG…EVDAYIPTPK (200 aa)) form the tr-type G domain. Residues 19–26 (GHVDHGKT) are G1. 19–26 (GHVDHGKT) serves as a coordination point for GTP. Thr-26 is a binding site for Mg(2+). The interval 60 to 64 (GITIA) is G2. The tract at residues 81–84 (DCPG) is G3. Residues 81 to 85 (DCPGH) and 136 to 139 (NKQD) each bind GTP. The G4 stretch occupies residues 136 to 139 (NKQD). The G5 stretch occupies residues 174-176 (SAL).

Belongs to the TRAFAC class translation factor GTPase superfamily. Classic translation factor GTPase family. EF-Tu/EF-1A subfamily. As to quaternary structure, monomer.

It localises to the cytoplasm. The enzyme catalyses GTP + H2O = GDP + phosphate + H(+). GTP hydrolase that promotes the GTP-dependent binding of aminoacyl-tRNA to the A-site of ribosomes during protein biosynthesis. This chain is Elongation factor Tu, found in Helicobacter pylori (strain P12).